The sequence spans 368 residues: Homoserine dehydrogenase (368 aa).

NAD(+) contacts are provided by Val-12, Gly-14, and Val-15. Val-15 serves as a coordination point for NADP(+). Positions 15, 59, 95, 96, and 119 each coordinate NADPH. Thr-95 contacts NAD(+). Thr-95 contributes to the NADP(+) binding site. Lys-119 is an NADP(+) binding site. Na(+)-binding residues include Glu-146, Val-149, Ala-151, and Leu-153. The NADP(+) site is built by Gly-209 and Glu-212. 2 residues coordinate L-homoserine: Glu-212 and Asp-223. The active-site Proton donor is the Lys-227. Residue Gly-349 coordinates NAD(+). Position 349 (Gly-349) interacts with NADP(+). Gly-349 is an NADPH binding site.

The protein belongs to the homoserine dehydrogenase family. It depends on a metal cation as a cofactor.

It carries out the reaction L-homoserine + NADP(+) = L-aspartate 4-semialdehyde + NADPH + H(+). The enzyme catalyses L-homoserine + NAD(+) = L-aspartate 4-semialdehyde + NADH + H(+). The protein operates within amino-acid biosynthesis; L-methionine biosynthesis via de novo pathway; L-homoserine from L-aspartate: step 3/3. It functions in the pathway amino-acid biosynthesis; L-threonine biosynthesis; L-threonine from L-aspartate: step 3/5. Functionally, catalyzes the conversion of L-aspartate-beta-semialdehyde (L-Asa) to L-homoserine (L-Hse), the third step in the biosynthesis of amino acids that derive from aspartate (the aspartate family of amino acids), including methioinine and threonine, the latter of which is a precursor to isoleucine; production of homoserine leads to a branch-point in the pathway as it can either be O-phosphorylated for processing to threonine, or O-acylated for processing to methionine. The protein is Homoserine dehydrogenase of Emericella nidulans (strain FGSC A4 / ATCC 38163 / CBS 112.46 / NRRL 194 / M139) (Aspergillus nidulans).